The chain runs to 142 residues: Nucleoside diphosphate kinase (142 aa).

ATP is bound by residues Lys11, Phe59, Arg87, Thr93, Arg104, and Asn114. Residue His117 is the Pros-phosphohistidine intermediate of the active site.

Belongs to the NDK family. Homotetramer. It depends on Mg(2+) as a cofactor.

The protein localises to the cytoplasm. It carries out the reaction a 2'-deoxyribonucleoside 5'-diphosphate + ATP = a 2'-deoxyribonucleoside 5'-triphosphate + ADP. It catalyses the reaction a ribonucleoside 5'-diphosphate + ATP = a ribonucleoside 5'-triphosphate + ADP. Functionally, major role in the synthesis of nucleoside triphosphates other than ATP. The ATP gamma phosphate is transferred to the NDP beta phosphate via a ping-pong mechanism, using a phosphorylated active-site intermediate. This is Nucleoside diphosphate kinase from Thiobacillus denitrificans (strain ATCC 25259 / T1).